The sequence spans 511 residues: Kinesin-like protein 8 (511 aa).

Residues Asn-5–Ile-356 form the Kinesin motor domain. An ATP-binding site is contributed by Gly-107–Thr-114. A phosphoserine mark is found at Ser-278, Ser-279, Ser-284, and Ser-456. The stretch at Glu-373–Tyr-489 forms a coiled coil.

This sequence belongs to the TRAFAC class myosin-kinesin ATPase superfamily. Kinesin family.

The protein localises to the cytoplasm. It is found in the cytoskeleton. The chain is Kinesin-like protein 8 (klp8) from Schizosaccharomyces pombe (strain 972 / ATCC 24843) (Fission yeast).